Consider the following 471-residue polypeptide: Putative multidrug resistance protein MdtD (471 aa).

Residues 1-11 (MTDLPDSTRWQ) are Periplasmic-facing. Residues 12–32 (LWIVAFGFFMQSLDTTIVNTA) traverse the membrane as a helical segment. The Cytoplasmic portion of the chain corresponds to 33–48 (LPSMAQSLGESPLHMH). Residues 49–69 (MVIVSYVLTVAVMLPASGWLA) form a helical membrane-spanning segment. Over 70 to 76 (DKVGVRN) the chain is Periplasmic. The helical transmembrane segment at 77–97 (IFFTAIVLFTLGSLFCALSGT) threads the bilayer. The Cytoplasmic segment spans residues 98 to 101 (LNEL). A helical transmembrane segment spans residues 102-124 (LLARALQGVGGAMMVPVGRLTVM). The Periplasmic portion of the chain corresponds to 125-137 (KIVPREQYMAAMT). The chain crosses the membrane as a helical span at residues 138–158 (FVTLPGQVGPLLGPALGGLLV). Residues 159-164 (EYASWH) lie on the Cytoplasmic side of the membrane. Residues 165 to 185 (WIFLINIPVGIIGAIATLMLM) traverse the membrane as a helical segment. Residues 186–196 (PNYTMQTRRFD) lie on the Periplasmic side of the membrane. Residues 197-217 (LSGFLLLAVGMAVLTLALDGS) form a helical membrane-spanning segment. Over 218 to 224 (KGTGLSP) the chain is Cytoplasmic. A helical membrane pass occupies residues 225–245 (LAIAGLVAVGVVALVLYLLHA). Residues 246–262 (RNNNRALFSLKLFRTRT) lie on the Periplasmic side of the membrane. A helical membrane pass occupies residues 263–283 (FSLGLAGSFAGRIGSGMLPFM). Over 284 to 285 (TP) the chain is Cytoplasmic. The helical transmembrane segment at 286–306 (VFLQIGLGFSPFHAGLMMIPM) threads the bilayer. The Periplasmic segment spans residues 307–341 (VLGSMGMKRIVVQVVNRFGYRRVLVATTLGLSLVT). A helical membrane pass occupies residues 342 to 362 (LLFMTTALLGWYYVLPFVLFL). Over 363–395 (QGMVNSTRFSSMNTLTLKDLPDNLASSGNSLLS) the chain is Cytoplasmic. A helical transmembrane segment spans residues 396–416 (MIMQLSMSIGVTIAGLLLGLF). Topologically, residues 417-430 (GSQHVSIDSGTTQT) are periplasmic. A helical transmembrane segment spans residues 431–451 (VFMYTWLSMALIIALPAFIFA). Residues 452–471 (RVPNDTHQNVAISRRKRSAQ) are Cytoplasmic-facing.

This sequence belongs to the major facilitator superfamily. TCR/Tet family.

The protein resides in the cell inner membrane. The sequence is that of Putative multidrug resistance protein MdtD from Escherichia coli (strain 55989 / EAEC).